The primary structure comprises 162 residues: Cyclic pyranopterin monophosphate synthase (162 aa).

Substrate contacts are provided by residues Leu-75 to His-77 and Met-113 to Glu-114. Asp-128 is an active-site residue.

The protein belongs to the MoaC family. As to quaternary structure, homohexamer; trimer of dimers.

The catalysed reaction is (8S)-3',8-cyclo-7,8-dihydroguanosine 5'-triphosphate = cyclic pyranopterin phosphate + diphosphate. It functions in the pathway cofactor biosynthesis; molybdopterin biosynthesis. Catalyzes the conversion of (8S)-3',8-cyclo-7,8-dihydroguanosine 5'-triphosphate to cyclic pyranopterin monophosphate (cPMP). The sequence is that of Cyclic pyranopterin monophosphate synthase from Klebsiella pneumoniae subsp. pneumoniae (strain ATCC 700721 / MGH 78578).